The following is a 356-amino-acid chain: tRNA N6-adenosine threonylcarbamoyltransferase (356 aa).

His131 and His135 together coordinate Fe cation. Substrate-binding positions include 154 to 158 (LVSGG), Asp187, Gly200, and Asn289. Residue Asp317 coordinates Fe cation.

Belongs to the KAE1 / TsaD family. It depends on Fe(2+) as a cofactor.

It is found in the cytoplasm. It catalyses the reaction L-threonylcarbamoyladenylate + adenosine(37) in tRNA = N(6)-L-threonylcarbamoyladenosine(37) in tRNA + AMP + H(+). Required for the formation of a threonylcarbamoyl group on adenosine at position 37 (t(6)A37) in tRNAs that read codons beginning with adenine. Is involved in the transfer of the threonylcarbamoyl moiety of threonylcarbamoyl-AMP (TC-AMP) to the N6 group of A37, together with TsaE and TsaB. TsaD likely plays a direct catalytic role in this reaction. The polypeptide is tRNA N6-adenosine threonylcarbamoyltransferase (Ruthia magnifica subsp. Calyptogena magnifica).